Consider the following 423-residue polypeptide: Phthiocerol/phthiodiolone dimycocerosyl transferase (423 aa).

His-125 (proton acceptor) is an active-site residue.

This sequence belongs to the acyltransferase PapA5 family. Monomer. Interacts directly with the acyl carrier protein (ACP) domain of the mycocerosic acid synthase (mas) protein.

The enzyme catalyses 2 a mycocerosyl-[mycocerosic acid synthase] + a phthiocerol = a dimycocerosyl phthiocerol + 2 holo-[mycocerosic acid synthase].. It catalyses the reaction 2 a mycocerosyl-[mycocerosic acid synthase] + a phthiodiolone = a dimycocerosyl phthiodiolone + 2 holo-[mycocerosic acid synthase].. It carries out the reaction 2 a mycocerosyl-[mycocerosic acid synthase] + a phenolphthiocerol = a dimycocerosyl phenolphthiocerol + 2 holo-[mycocerosic acid synthase].. Functionally, catalyzes diesterification of phthiocerol, phthiodiolone, and phenolphthiocerol with mycocerosic acids, the final step in the phthiocerol, phthiodiolone and phenolphthiocerol dimycocerosate esters (PDIM) synthesis. Can directly transfer the mycocerosate bound to the mycocerosic acid synthase (mas) onto the substrate alcohols. In Mycobacterium leprae (strain TN), this protein is Phthiocerol/phthiodiolone dimycocerosyl transferase (papA5).